A 1227-amino-acid polypeptide reads, in one-letter code: Pre-mRNA-splicing factor ATP-dependent RNA helicase PRP16 (1227 aa).

Position 2 is an N-acetylglycine (Gly2). Ser56 is subject to Phosphoserine. Residues 60–89 (REREEKDDGEDKKKSKVSSYKDWEESKDDQ) show a composition bias toward basic and acidic residues. A disordered region spans residues 60 to 320 (REREEKDDGE…ERQQWEDDQR (261 aa)). Thr117 is subject to Phosphothreonine. The segment covering 128-201 (FWERSRQRER…SRRNEPESPR (74 aa)) has biased composition (basic and acidic residues). Residues Ser199 and Ser224 each carry the phosphoserine modification. Positions 222 to 239 (YGSSRRSQWESPSPTPSY) are enriched in polar residues. Basic and acidic residues predominate over residues 240-263 (RDSERSHRLSTRDRDRSVRGKYSD). At Lys260 the chain carries N6-acetyllysine. A compositionally biased stretch (acidic residues) spans 300–310 (GEEGISFDTEE). Basic and acidic residues predominate over residues 311-320 (ERQQWEDDQR). Glycyl lysine isopeptide (Lys-Gly) (interchain with G-Cter in SUMO2) cross-links involve residues Lys482, Lys483, and Lys504. In terms of domain architecture, Helicase ATP-binding spans 542-705 (LTIIRDNSIV…FGNVPIFHIP (164 aa)). ATP is bound at residue 555 to 562 (GETGSGKT). The DEAH box signature appears at 652 to 655 (DEAH). Residues 727–902 (AVKQSLQVHL…NVVLLLKSLG (176 aa)) form the Helicase C-terminal domain. Residues 1155–1227 (GKSRQENRRR…PRRTPARFGL (73 aa)) form a disordered region. Composition is skewed to basic and acidic residues over residues 1157 to 1169 (SRQE…KEEA) and 1181 to 1194 (EQLR…EKRS). Lys1166 participates in a covalent cross-link: Glycyl lysine isopeptide (Lys-Gly) (interchain with G-Cter in SUMO2). Phosphoserine is present on Ser1194.

Belongs to the DEAD box helicase family. DEAH subfamily. PRP16 sub-subfamily. In terms of assembly, identified in the spliceosome C complex.

It localises to the nucleus. It catalyses the reaction ATP + H2O = ADP + phosphate + H(+). Probable ATP-binding RNA helicase. Involved in pre-mRNA splicing as component of the spliceosome. In Homo sapiens (Human), this protein is Pre-mRNA-splicing factor ATP-dependent RNA helicase PRP16 (DHX38).